The sequence spans 482 residues: Putative fatty acid desaturase 2-like protein FADS2B (482 aa).

The tract at residues 1–31 is disordered; the sequence is MKFEEKCGDNGSIVGRNQSYPGEKHQPKGKP. At 1–167 the chain is on the cytoplasmic side; it reads MKFEEKCGDN…EAMNMFHANL (167 aa). Residues 56–132 enclose the Cytochrome b5 heme-binding domain; sequence LSMYTWLEIQ…LKPLLIGELA (77 aa). 2 residues coordinate heme: H90 and H113. A helical transmembrane segment spans residues 168–188; that stretch reads GFFFLHFVQILILEVLAWLIV. Residues 189-190 lie on the Lumenal side of the membrane; it reads YH. A helical membrane pass occupies residues 191-211; the sequence is FGSGWPVTMFISFLLTISQAS. The Cytoplasmic segment spans residues 212–305; sequence SSFLQHDAGH…YEEQHLYFYK (94 aa). The Histidine box-1 motif lies at 217–221; that stretch reads HDAGH. The Histidine box-2 motif lies at 254 to 258; the sequence is HFEQH. The helical transmembrane segment at 306-326 threads the bilayer; sequence VWLPLFMPVYLKLPSMQAMYL. Topologically, residues 327–343 are lumenal; that stretch reads QRYWVCFSLQDITWVSS. A helical transmembrane segment spans residues 344-364; sequence FYIYFITFGLYYGIFGTMLLI. Residues 365 to 482 are Cytoplasmic-facing; it reads YLVKFLESPW…AALWADAYYE (118 aa). A Histidine box-3 motif is present at residues 421 to 425; that stretch reads QIEHH.

It belongs to the fatty acid desaturase type 1 family.

Its subcellular location is the endoplasmic reticulum membrane. Its pathway is lipid metabolism; polyunsaturated fatty acid biosynthesis. The chain is Putative fatty acid desaturase 2-like protein FADS2B from Homo sapiens (Human).